The primary structure comprises 418 residues: Tyrosine--tRNA ligase (418 aa).

Tyr-34 provides a ligand contact to L-tyrosine. The short motif at 39-48 is the 'HIGH' region element; the sequence is PTADSLHLGH. 2 residues coordinate L-tyrosine: Tyr-169 and Gln-173. Positions 229–233 match the 'KMSKS' region motif; the sequence is KFGKS. Lys-232 provides a ligand contact to ATP. An S4 RNA-binding domain is found at 352–418; the sequence is NNIVELLVSS…GKKKYFVLTY (67 aa).

This sequence belongs to the class-I aminoacyl-tRNA synthetase family. TyrS type 1 subfamily. Homodimer.

Its subcellular location is the cytoplasm. The enzyme catalyses tRNA(Tyr) + L-tyrosine + ATP = L-tyrosyl-tRNA(Tyr) + AMP + diphosphate + H(+). Its function is as follows. Catalyzes the attachment of tyrosine to tRNA(Tyr) in a two-step reaction: tyrosine is first activated by ATP to form Tyr-AMP and then transferred to the acceptor end of tRNA(Tyr). The polypeptide is Tyrosine--tRNA ligase (Streptococcus pneumoniae (strain Taiwan19F-14)).